Here is a 367-residue protein sequence, read N- to C-terminus: 5-amino-6-(D-ribitylamino)uracil--L-tyrosine 4-hydroxyphenyl transferase (367 aa).

The region spanning 54–288 (ITYIENWNIN…VYAISRLMFR (235 aa)) is the Radical SAM core domain. Residues Cys68, Cys72, and Cys75 each contribute to the [4Fe-4S] cluster site.

The protein belongs to the radical SAM superfamily. CofH family. In terms of assembly, consists of two subunits, CofG and CofH. It depends on [4Fe-4S] cluster as a cofactor.

The enzyme catalyses 5-amino-6-(D-ribitylamino)uracil + L-tyrosine + S-adenosyl-L-methionine = 5-amino-5-(4-hydroxybenzyl)-6-(D-ribitylimino)-5,6-dihydrouracil + 2-iminoacetate + 5'-deoxyadenosine + L-methionine + H(+). It participates in cofactor biosynthesis; coenzyme F0 biosynthesis. Its function is as follows. Catalyzes the radical-mediated synthesis of 5-amino-5-(4-hydroxybenzyl)-6-(D-ribitylimino)-5,6-dihydrouracil from 5-amino-6-(D-ribitylamino)uracil and L-tyrosine. The sequence is that of 5-amino-6-(D-ribitylamino)uracil--L-tyrosine 4-hydroxyphenyl transferase from Methanothermobacter thermautotrophicus (strain ATCC 29096 / DSM 1053 / JCM 10044 / NBRC 100330 / Delta H) (Methanobacterium thermoautotrophicum).